The chain runs to 182 residues: Adenine phosphoribosyltransferase (182 aa).

This sequence belongs to the purine/pyrimidine phosphoribosyltransferase family. As to quaternary structure, homodimer.

It is found in the cytoplasm. The catalysed reaction is AMP + diphosphate = 5-phospho-alpha-D-ribose 1-diphosphate + adenine. It functions in the pathway purine metabolism; AMP biosynthesis via salvage pathway; AMP from adenine: step 1/1. Its function is as follows. Catalyzes a salvage reaction resulting in the formation of AMP, that is energically less costly than de novo synthesis. This Bordetella pertussis (strain Tohama I / ATCC BAA-589 / NCTC 13251) protein is Adenine phosphoribosyltransferase.